Consider the following 396-residue polypeptide: Lipid-A-disaccharide synthase (396 aa).

It belongs to the LpxB family.

The catalysed reaction is a lipid X + a UDP-2-N,3-O-bis[(3R)-3-hydroxyacyl]-alpha-D-glucosamine = a lipid A disaccharide + UDP + H(+). It functions in the pathway bacterial outer membrane biogenesis; LPS lipid A biosynthesis. Functionally, condensation of UDP-2,3-diacylglucosamine and 2,3-diacylglucosamine-1-phosphate to form lipid A disaccharide, a precursor of lipid A, a phosphorylated glycolipid that anchors the lipopolysaccharide to the outer membrane of the cell. In Nitrobacter winogradskyi (strain ATCC 25391 / DSM 10237 / CIP 104748 / NCIMB 11846 / Nb-255), this protein is Lipid-A-disaccharide synthase.